A 309-amino-acid polypeptide reads, in one-letter code: Nucleotide-binding protein cgR_1639 (309 aa).

Position 32–39 (32–39 (GMSGAGLS)) interacts with ATP. Position 83-86 (83-86 (DVRS)) interacts with GTP.

Belongs to the RapZ-like family.

In terms of biological role, displays ATPase and GTPase activities. The chain is Nucleotide-binding protein cgR_1639 from Corynebacterium glutamicum (strain R).